Reading from the N-terminus, the 445-residue chain is Tubulin beta-1 chain (445 aa).

An MREI motif motif is present at residues 1–4 (MREI). Positions 11, 69, 138, 142, 143, 144, 204, and 226 each coordinate GTP. Glu-69 is a Mg(2+) binding site. Residues 425-445 (YQDATAEEEGEFEEEGEEELA) are disordered. Acidic residues predominate over residues 429-445 (TAEEEGEFEEEGEEELA). A 5-glutamyl polyglutamate modification is found at Glu-438.

Belongs to the tubulin family. In terms of assembly, dimer of alpha and beta chains. A typical microtubule is a hollow water-filled tube with an outer diameter of 25 nm and an inner diameter of 15 nM. Alpha-beta heterodimers associate head-to-tail to form protofilaments running lengthwise along the microtubule wall with the beta-tubulin subunit facing the microtubule plus end conferring a structural polarity. Microtubules usually have 13 protofilaments but different protofilament numbers can be found in some organisms and specialized cells. Mg(2+) is required as a cofactor. Post-translationally, some glutamate residues at the C-terminus are polyglycylated, resulting in polyglycine chains on the gamma-carboxyl group. Glycylation is mainly limited to tubulin incorporated into axonemes (cilia and flagella) whereas glutamylation is prevalent in neuronal cells, centrioles, axonemes, and the mitotic spindle. Both modifications can coexist on the same protein on adjacent residues, and lowering polyglycylation levels increases polyglutamylation, and reciprocally. The precise function of polyglycylation is still unclear. In terms of processing, some glutamate residues at the C-terminus are polyglutamylated, resulting in polyglutamate chains on the gamma-carboxyl group. Polyglutamylation plays a key role in microtubule severing by spastin (SPAST). SPAST preferentially recognizes and acts on microtubules decorated with short polyglutamate tails: severing activity by SPAST increases as the number of glutamates per tubulin rises from one to eight, but decreases beyond this glutamylation threshold.

It localises to the cytoplasm. Its subcellular location is the cytoskeleton. Functionally, tubulin is the major constituent of microtubules, a cylinder consisting of laterally associated linear protofilaments composed of alpha- and beta-tubulin heterodimers. Microtubules grow by the addition of GTP-tubulin dimers to the microtubule end, where a stabilizing cap forms. Below the cap, tubulin dimers are in GDP-bound state, owing to GTPase activity of alpha-tubulin. The sequence is that of Tubulin beta-1 chain from Gadus morhua (Atlantic cod).